A 340-amino-acid chain; its full sequence is uncharacterized protein (340 aa).

This is an uncharacterized protein from Acanthamoeba polyphaga mimivirus (APMV).